Here is a 66-residue protein sequence, read N- to C-terminus: Large ribosomal subunit protein bL33c (66 aa).

Belongs to the bacterial ribosomal protein bL33 family.

The protein localises to the plastid. The protein resides in the chloroplast. The polypeptide is Large ribosomal subunit protein bL33c (Helianthus annuus (Common sunflower)).